The primary structure comprises 332 residues: tRNA-dihydrouridine(20/20a) synthase (332 aa).

Residues 20-22 (PMM) and glutamine 73 contribute to the FMN site. The active-site Proton donor is the cysteine 103. Residues lysine 142, histidine 174, 214 to 216 (NGG), and 236 to 237 (GR) each bind FMN.

This sequence belongs to the Dus family. DusA subfamily. The cofactor is FMN.

The catalysed reaction is 5,6-dihydrouridine(20) in tRNA + NADP(+) = uridine(20) in tRNA + NADPH + H(+). The enzyme catalyses 5,6-dihydrouridine(20) in tRNA + NAD(+) = uridine(20) in tRNA + NADH + H(+). It catalyses the reaction 5,6-dihydrouridine(20a) in tRNA + NADP(+) = uridine(20a) in tRNA + NADPH + H(+). It carries out the reaction 5,6-dihydrouridine(20a) in tRNA + NAD(+) = uridine(20a) in tRNA + NADH + H(+). In terms of biological role, catalyzes the synthesis of 5,6-dihydrouridine (D), a modified base found in the D-loop of most tRNAs, via the reduction of the C5-C6 double bond in target uridines. Specifically modifies U20 and U20a in tRNAs. This Pseudomonas aeruginosa (strain ATCC 15692 / DSM 22644 / CIP 104116 / JCM 14847 / LMG 12228 / 1C / PRS 101 / PAO1) protein is tRNA-dihydrouridine(20/20a) synthase.